We begin with the raw amino-acid sequence, 181 residues long: ATP synthase subunit delta (181 aa).

The protein belongs to the ATPase delta chain family. F-type ATPases have 2 components, F(1) - the catalytic core - and F(0) - the membrane proton channel. F(1) has five subunits: alpha(3), beta(3), gamma(1), delta(1), epsilon(1). F(0) has three main subunits: a(1), b(2) and c(10-14). The alpha and beta chains form an alternating ring which encloses part of the gamma chain. F(1) is attached to F(0) by a central stalk formed by the gamma and epsilon chains, while a peripheral stalk is formed by the delta and b chains.

The protein resides in the cell inner membrane. Functionally, f(1)F(0) ATP synthase produces ATP from ADP in the presence of a proton or sodium gradient. F-type ATPases consist of two structural domains, F(1) containing the extramembraneous catalytic core and F(0) containing the membrane proton channel, linked together by a central stalk and a peripheral stalk. During catalysis, ATP synthesis in the catalytic domain of F(1) is coupled via a rotary mechanism of the central stalk subunits to proton translocation. This protein is part of the stalk that links CF(0) to CF(1). It either transmits conformational changes from CF(0) to CF(1) or is implicated in proton conduction. This Syntrophus aciditrophicus (strain SB) protein is ATP synthase subunit delta.